The following is an 85-amino-acid chain: Cell division topological specificity factor (85 aa).

The protein belongs to the MinE family.

In terms of biological role, prevents the cell division inhibition by proteins MinC and MinD at internal division sites while permitting inhibition at polar sites. This ensures cell division at the proper site by restricting the formation of a division septum at the midpoint of the long axis of the cell. In Shewanella amazonensis (strain ATCC BAA-1098 / SB2B), this protein is Cell division topological specificity factor.